A 236-amino-acid polypeptide reads, in one-letter code: Leucyl/phenylalanyl-tRNA--protein transferase (236 aa).

The protein belongs to the L/F-transferase family.

The protein localises to the cytoplasm. It catalyses the reaction N-terminal L-lysyl-[protein] + L-leucyl-tRNA(Leu) = N-terminal L-leucyl-L-lysyl-[protein] + tRNA(Leu) + H(+). The enzyme catalyses N-terminal L-arginyl-[protein] + L-leucyl-tRNA(Leu) = N-terminal L-leucyl-L-arginyl-[protein] + tRNA(Leu) + H(+). The catalysed reaction is L-phenylalanyl-tRNA(Phe) + an N-terminal L-alpha-aminoacyl-[protein] = an N-terminal L-phenylalanyl-L-alpha-aminoacyl-[protein] + tRNA(Phe). Its function is as follows. Functions in the N-end rule pathway of protein degradation where it conjugates Leu, Phe and, less efficiently, Met from aminoacyl-tRNAs to the N-termini of proteins containing an N-terminal arginine or lysine. The chain is Leucyl/phenylalanyl-tRNA--protein transferase from Shewanella halifaxensis (strain HAW-EB4).